Reading from the N-terminus, the 487-residue chain is Protein nucleotidyltransferase YdiU (487 aa).

ATP-binding residues include glycine 92, arginine 95, lysine 106, aspartate 118, glycine 119, arginine 169, and arginine 176. Aspartate 253 functions as the Proton acceptor in the catalytic mechanism. Positions 254 and 263 each coordinate Mg(2+). Residue aspartate 263 coordinates ATP.

Belongs to the SELO family. It depends on Mg(2+) as a cofactor. Mn(2+) is required as a cofactor.

The catalysed reaction is L-seryl-[protein] + ATP = 3-O-(5'-adenylyl)-L-seryl-[protein] + diphosphate. The enzyme catalyses L-threonyl-[protein] + ATP = 3-O-(5'-adenylyl)-L-threonyl-[protein] + diphosphate. It catalyses the reaction L-tyrosyl-[protein] + ATP = O-(5'-adenylyl)-L-tyrosyl-[protein] + diphosphate. It carries out the reaction L-histidyl-[protein] + UTP = N(tele)-(5'-uridylyl)-L-histidyl-[protein] + diphosphate. The catalysed reaction is L-seryl-[protein] + UTP = O-(5'-uridylyl)-L-seryl-[protein] + diphosphate. The enzyme catalyses L-tyrosyl-[protein] + UTP = O-(5'-uridylyl)-L-tyrosyl-[protein] + diphosphate. Nucleotidyltransferase involved in the post-translational modification of proteins. It can catalyze the addition of adenosine monophosphate (AMP) or uridine monophosphate (UMP) to a protein, resulting in modifications known as AMPylation and UMPylation. This Bordetella pertussis (strain Tohama I / ATCC BAA-589 / NCTC 13251) protein is Protein nucleotidyltransferase YdiU.